Consider the following 312-residue polypeptide: Methionyl-tRNA formyltransferase (312 aa).

(6S)-5,6,7,8-tetrahydrofolate is bound at residue 109–112; the sequence is SLLP.

Belongs to the Fmt family.

The enzyme catalyses L-methionyl-tRNA(fMet) + (6R)-10-formyltetrahydrofolate = N-formyl-L-methionyl-tRNA(fMet) + (6S)-5,6,7,8-tetrahydrofolate + H(+). Attaches a formyl group to the free amino group of methionyl-tRNA(fMet). The formyl group appears to play a dual role in the initiator identity of N-formylmethionyl-tRNA by promoting its recognition by IF2 and preventing the misappropriation of this tRNA by the elongation apparatus. This Ruminiclostridium cellulolyticum (strain ATCC 35319 / DSM 5812 / JCM 6584 / H10) (Clostridium cellulolyticum) protein is Methionyl-tRNA formyltransferase.